A 553-amino-acid chain; its full sequence is Cytochrome P450 86A22 (553 aa).

Residues 8–24 (MIVAIVAAYLLWFKSIT) form a helical membrane-spanning segment. Residue Cys459 participates in heme binding.

Belongs to the cytochrome P450 family. It depends on heme as a cofactor. In terms of tissue distribution, mostly expressed in the developing stigma of floral buds. Weakly detected in leaves, stems and flowers.

It localises to the membrane. The catalysed reaction is (9Z)-octadecenoyl-CoA + reduced [NADPH--hemoprotein reductase] + O2 = (9Z)-18-hydroxyoctadecenoyl-CoA + oxidized [NADPH--hemoprotein reductase] + H2O + H(+). It catalyses the reaction (9Z,12Z)-octadecadienoyl-CoA + reduced [NADPH--hemoprotein reductase] + O2 = (9Z,12Z)-18-hydroxyoctadecadienoyl-CoA + oxidized [NADPH--hemoprotein reductase] + H2O + H(+). Its function is as follows. Fatty acyl-CoA omega-hydroxylase essential for the production of omega-hydroxy fatty acids and the biosynthesis of triacylglycerol-/diacylglycerol-based estolide polyesters in the stigma. Substrate preference is 16:0-CoA &gt; 18:1-CoA &gt; 18:0-CoA. In Petunia hybrida (Petunia), this protein is Cytochrome P450 86A22.